We begin with the raw amino-acid sequence, 158 residues long: NAD(P)H-quinone oxidoreductase subunit J, chloroplastic (158 aa).

Belongs to the complex I 30 kDa subunit family. As to quaternary structure, NDH is composed of at least 16 different subunits, 5 of which are encoded in the nucleus.

Its subcellular location is the plastid. The protein localises to the chloroplast thylakoid membrane. The enzyme catalyses a plastoquinone + NADH + (n+1) H(+)(in) = a plastoquinol + NAD(+) + n H(+)(out). The catalysed reaction is a plastoquinone + NADPH + (n+1) H(+)(in) = a plastoquinol + NADP(+) + n H(+)(out). In terms of biological role, NDH shuttles electrons from NAD(P)H:plastoquinone, via FMN and iron-sulfur (Fe-S) centers, to quinones in the photosynthetic chain and possibly in a chloroplast respiratory chain. The immediate electron acceptor for the enzyme in this species is believed to be plastoquinone. Couples the redox reaction to proton translocation, and thus conserves the redox energy in a proton gradient. The protein is NAD(P)H-quinone oxidoreductase subunit J, chloroplastic of Piper cenocladum (Ant piper).